The following is an 856-amino-acid chain: Dynamin-1 (856 aa).

The Dynamin-type G domain occupies 28–294 (DLDLPQIAVV…LTNHIRDTLP (267 aa)). The G1 motif stretch occupies residues 38–45 (GGQSAGKS). The GDP site is built by S41, G43, K44, S45, S46, R59, and G60. The segment at 64–66 (VTR) is G2 motif. Y80 carries the phosphotyrosine modification. Y125 carries the 3'-nitrotyrosine; alternate modification. Residue Y125 is modified to Phosphotyrosine; alternate. The tract at residues 136 to 139 (DLPG) is G3 motif. Positions 205-208 (TKLD) are G4 motif. GDP contacts are provided by K206, D208, D211, N236, R237, and Q239. The segment at 235 to 238 (VNRS) is G5 motif. Phosphoserine occurs at positions 306 and 347. Y354 carries the post-translational modification Phosphotyrosine. S512 carries the phosphoserine modification. A PH domain is found at 519–625 (LVIRKGWLTI…WKASFLRAGV (107 aa)). In terms of domain architecture, GED spans 659–750 (VETIRNLVDS…IIGDINTTTV (92 aa)). A disordered region spans residues 750–856 (VSTPMPPPVD…PIGSGKSIPS (107 aa)). Polar residues predominate over residues 763 to 781 (LQVQSVPTGRRSPTSSPTP). Phosphoserine occurs at positions 774 and 778. R796 bears the Omega-N-methylarginine mark. Residue S822 is modified to Phosphoserine. Positions 825 to 844 (PFGPPPQVPSRPNRAPPGVP) are enriched in pro residues.

Belongs to the TRAFAC class dynamin-like GTPase superfamily. Dynamin/Fzo/YdjA family. As to quaternary structure, homodimer; homodimerization is mediated by the dynamin-type G domain which promotes assembly-stimulated GTPase activity. Homo-tetramer formed from two dimers in the absence of lipid. Oligomerizes into a helical polymer that self-assembles around the vesicle membrane, when associated to the menbrane through lipid binding. Interacts (via C-terminal proline-rich domain (PRD)) with SNX9 (via SH3 domain); this interaction allows regulation of DNM1 self-assembly during late stages of endocytic vesicle formation and supports DNM1's early functions in accelerating clathrin-coated pits (CCPs) maturation in non neuronals cell. Interacts (via C-terminal proline-rich domain (PRD)) with MYO1E (via SH3 domain); this interaction regulates receptor-mediated endocytosis. Interacts with SNX33 (via SH3 domain); this interaction decreases DNM1-dependent endocytosis. Interacts with DIAPH1. Interacts with GRB2 (via SH3 domain); this interaction mediates disassembly of DNM1 polymers, therefore modulates self-assembly. Forms a complex with BIN1 (via SH3 domain) and SH3GL2 (via SH3 domain). Forms a complex with SH3GL2 (via SH3 domain) and AMPH (via SH3 domain). Forms a complex with SH3GL2 (via SH3 domain) and SYNJ1. Interacts with AMPH. Interacts (via C-terminal proline-rich domain (PRD)) with SYT1; this interaction facilitates vesicle fission during clathrin-mediated endocytosis (CME). Interacts (via C-terminal proline-rich domain (PRD)) with PLCG1 (via SH3 domain); this interaction stimulates the release of GDP from DNM1 and enhances DNM1-dependent endocytosis. Interacts with SNPH; this interaction inhibits the binding of DNM1 to AMPH and DNM1-receptor-mediated endocytosis. Interacts with CAV1. Interacts with SH3GLB1 (via SH3 domain). Interacts with PACSIN1 (via SH3 domain), PACSIN2 (via SH3 domain) and PACSIN3 (via SH3 domain). Interacts with UNC119; this interaction decreases DNM1's GTPase activity and affects DNM1's interaction with AMPH. Interacts with AMPH. Interacts (GTP-bound form) with DNAJC6; this interaction allows clathrin-coated vesicle (CCV) formation at the plasma membrane. In terms of processing, phosphorylation at Ser-774 by GSK3B/GSK3-beta leads to inactivation of receptor-mediated endocytosis in non-neuronal cells. Dephosphorylation at Ser-774, through the EGFR downstream signaling, leads to activation and regulates early stages of clathrin-mediated endocytosis (CME).

It is found in the cell membrane. It localises to the membrane. The protein resides in the clathrin-coated pit. Its subcellular location is the cytoplasmic vesicle. The protein localises to the presynapse. It is found in the secretory vesicle. It localises to the chromaffin granule. It catalyses the reaction GTP + H2O = GDP + phosphate + H(+). Catalyzes the hydrolysis of GTP and utilizes this energy to mediate vesicle scission and participates in many forms of endocytosis, such as clathrin-mediated endocytosis or synaptic vesicle endocytosis as well as rapid endocytosis (RE). Associates to the membrane, through lipid binding, and self-assembles into rings and stacks of interconnected rings through oligomerization to form a helical polymer around the vesicle membrane leading to constriction of invaginated coated pits around their necks. Self-assembly of the helical polymer induces membrane tubules narrowing until the polymer reaches a length sufficient to trigger GTP hydrolysis. Depending on the curvature imposed on the tubules, membrane detachment from the helical polymer upon GTP hydrolysis can cause spontaneous hemifission followed by complete fission. May play a role in regulating early stages of clathrin-mediated endocytosis in non-neuronal cells through its activation by dephosphorylation via the signaling downstream of EGFR. Controls vesicle size at a step before fission, during formation of membrane pits, at hippocampal synapses. Controls plastic adaptation of the synaptic vesicle recycling machinery to high levels of activity. Mediates rapid endocytosis (RE), a Ca(2+)-dependent and clathrin- and K(+)-independent process in chromaffin cells. Microtubule-associated force-producing protein involved in producing microtubule bundles and able to bind and hydrolyze GTP. Through its interaction with DNAJC6, acts during the early steps of clathrin-coated vesicle (CCV) formation. The polypeptide is Dynamin-1 (Bos taurus (Bovine)).